Consider the following 61-residue polypeptide: MGRADTPRHPPPPAAGFGVHRGAFLIPVALRVLLAGRTPRPFTPGLADPRRLGPRRVQAAQ.

The segment at 38–61 (TPRPFTPGLADPRRLGPRRVQAAQ) is disordered.

This is an uncharacterized protein from Homo sapiens (Human).